A 301-amino-acid polypeptide reads, in one-letter code: Peroxisome assembly protein 26 (301 aa).

At 1 to 246 the chain is on the cytoplasmic side; it reads MKNDSSTSAA…DAAASHLLSQ (246 aa). The chain crosses the membrane as a helical; Signal-anchor for type II membrane protein span at residues 247 to 263; the sequence is PFKKSLLAALILCLLVL. The Peroxisomal portion of the chain corresponds to 264–301; that stretch reads RFDPATPSSLPFLYQLAHLFRRIQKATLSRLYPLALRD.

Belongs to the peroxin-26 family. In terms of assembly, interacts directly with PEX6 via its cytoplasmic domain. Interacts indirectly with PEX1, via its interaction with PEX6.

It is found in the peroxisome membrane. Its function is as follows. Peroxisomal docking factor that anchors PEX1 and PEX6 to peroxisome membranes. It is therefore required for the formation of the PEX1-PEX6 AAA ATPase complex, a complex that mediates the extraction of the PEX5 receptor from peroxisomal membrane. The sequence is that of Peroxisome assembly protein 26 (Pex26) from Cricetulus griseus (Chinese hamster).